A 61-amino-acid chain; its full sequence is Large ribosomal subunit protein bL28 (61 aa).

Residues methionine 1–threonine 24 form a disordered region. The segment covering lysine 9–proline 23 has biased composition (polar residues).

Belongs to the bacterial ribosomal protein bL28 family.

This Lactobacillus acidophilus (strain ATCC 700396 / NCK56 / N2 / NCFM) protein is Large ribosomal subunit protein bL28.